Reading from the N-terminus, the 1918-residue chain is Diacylglycerol kinase eta (1918 aa).

The span at 1 to 10 (MAHLKLDTLH) shows a compositional bias: basic and acidic residues. Positions 1 to 37 (MAHLKLDTLHVQRSPRGSRRSSPSSGRSSACSSGSIS) are disordered. The segment covering 20 to 37 (RSSPSSGRSSACSSGSIS) has biased composition (low complexity). The 94-residue stretch at 82 to 175 (AIIKEGFLLK…WLGGLKTATA (94 aa)) folds into the PH domain. 2 consecutive Phorbol-ester/DAG-type zinc fingers follow at residues 195-245 (HHHW…IANC) and 268-319 (PHQW…AVAC). The region spanning 350–486 (GNFSPLLVFV…DRWSIMVFEK (137 aa)) is the DAGKc domain. Disordered regions lie at residues 783 to 805 (GANI…NTPT), 1017 to 1067 (TTLC…DDNP), 1177 to 1212 (PNTI…GDSI), and 1380 to 1399 (ERDK…TEEA). The span at 1177–1189 (PNTILTTSTSPTK) shows a compositional bias: polar residues. In terms of domain architecture, SAM spans 1855 to 1918 (WSVNEVVTWL…LQAIKDLSEN (64 aa)).

This sequence belongs to the eukaryotic diacylglycerol kinase family.

Its subcellular location is the cytoplasm. The enzyme catalyses a 1,2-diacyl-sn-glycerol + ATP = a 1,2-diacyl-sn-glycero-3-phosphate + ADP + H(+). Phosphorylates diacylglycerol (DAG) to generate phosphatidic acid (PA). In Drosophila erecta (Fruit fly), this protein is Diacylglycerol kinase eta.